The sequence spans 1080 residues: MAPRRNSNISSSGNSTQQQHQQQLQQQHQTQQHQLLQFYAENVNSSGVLMAPMQGTGGVGGVGGGGMVHCCLPSGDCRKLDTLIHLNELSLADCIRVLCNNENCSAGQYMHRECFEWWEASVLQALKANGRARSWSERQRLQHLWTKKGYELVQKACSCKCGRGQLRKDLDWVPPSSQGVIYLNGSGNRPTLANGSLSEDDDKKKAKKKRNRNNNNNNGGGGGGGAGVNGNTKTPLSNNNGNSYAGLTPNPNVGVIGSGLPHNNGNTASNGSSGNNGSSGVLQTSALATFSNILNTNNVLGLDLRARAGSLSSSGAGSGSTSPSDSQSSGEISVSPVQQLLPQQQQQQQQSLLIQPLGPAFGSNLLQNGLGLSKNLLIAPQQQQQQQLQQQQQQQNNLPALANISNFKPLASYEQQQLVQQQKNKEVELYSDRVRSTSGCNGIFSRRLDFSSFNLLPKTRLNSYQVKIEDEGNHGNDETRLFILSSLAQSQMSRVACILCEEPLLVFDRYPLVDGSFFLSPKQHSSGCIEVKYEGRTLYLTCVCMSCLDGTSSSRAINCRFCKEPWDGSSLVLGTMYAYDIFAAMPCCAERFKCNNCFKMLMHPQQRLSFYSDYSHGVTCPYCNTQDTHFVKPLTFCYAKTTATRLPTLAXHEAPLESPVGTGATTTQVPNAQGSPTASGCSSNTIASKQPPKQPLYNAAIDYSAPLQQQINPDLIGAHPHAQQHQQQVRQQQQQQQQQQPQQQQQQQQQQTQQQQSQQQQQQQQQQHQPVVSTFQRGNFPQQSHKTMNMMAMADVMSKYQQQQHQQQQQQRQQQHNLQPQQQHATQKGLEGLLLTNTNTSNNNSSSSSSSSISNLIISHNSASNTGNKMQPTWGQSDAISALWGCSSSSSGCSSGSGSQPSLSPTASSNGNDGSKMMLWAAQSSPQNAATLRDGFKELQRQQPPQQQVPQQQPHAASPTASLTSSSSSSNGWSASHYGKPNIWELPGSTGQRTPASSHDIFTDLLCNLSISQDNSSQQASSKADASDVSSNSSSSAGELLEAANIWRFPEYASSQLYMEEPTGGAAACMQLFNDYLNMN.

Disordered regions lie at residues 1–27 (MAPR…LQQQ), 181–277 (IYLN…GNNG), 310–335 (SLSS…ISVS), 655–693 (PLES…QPPK), 798–826 (SKYQ…QHAT), 891–916 (SGCS…DGSK), and 940–974 (QRQQ…NGWS). Residues 181-197 (IYLNGSGNRPTLANGSL) show a composition bias toward polar residues. Residues 218 to 228 (NGGGGGGGAGV) are compositionally biased toward gly residues. Polar residues predominate over residues 232–251 (TKTPLSNNNGNSYAGLTPNP). Over residues 263–277 (NNGNTASNGSSGNNG) the composition is skewed to low complexity. Residues 663–688 (GATTTQVPNAQGSPTASGCSSNTIAS) are compositionally biased toward polar residues. The segment covering 801 to 826 (QQQQHQQQQQQRQQQHNLQPQQQHAT) has biased composition (low complexity). The span at 900 to 913 (QPSLSPTASSNGND) shows a compositional bias: polar residues. The span at 941-974 (RQQPPQQQVPQQQPHAASPTASLTSSSSSSNGWS) shows a compositional bias: low complexity.

Expressed in all imaginal cells of the embryo and larvae. Expressed in a subset of tracheal fusion cells from stage 14 to the end of embryogenesis in metameres 2-9, lateral trunk and ventral anastomoses.

Its subcellular location is the cytoplasm. Its function is as follows. Required for imaginal cell differentiation, may be involved in hormonal responsiveness during metamorphosis. Involved in an inhibitory signaling mechanism to determine the number of cells that will form unicellular sprouts in the trachea. Regulated by transcription factor esg. The longer hdc protein is completely functional and the shorter protein carries some function. The polypeptide is Headcase protein (Drosophila melanogaster (Fruit fly)).